The sequence spans 373 residues: XK-related protein 9 (373 aa).

The next 8 helical transmembrane spans lie at 8-28, 38-58, 166-186, 203-223, 224-244, 256-276, 295-315, and 318-338; these read FMMS…DIWV, YVFS…AQCF, AAIM…QVAL, ITYL…VVLL, LFLN…LGII, CISM…FTFF, VLGT…IFNP, and FIPI…FLIV.

It belongs to the XK family. In terms of processing, undergoes proteolytic processing by caspase-3 (CASP3), caspase-6 (CASP6) and caspase-7 (CASP7) to generate the XK-related protein 9, processed form, leading to its activation.

It localises to the cell membrane. It carries out the reaction a 1,2-diacyl-sn-glycero-3-phospho-L-serine(in) = a 1,2-diacyl-sn-glycero-3-phospho-L-serine(out). Its activity is regulated as follows. Activated upon caspase cleavage to generate the XK-related protein 9, processed form. Does not act prior the onset of apoptosis. Phospholipid scramblase that promotes phosphatidylserine exposure on apoptotic cell surface. Phosphatidylserine is a specific marker only present at the surface of apoptotic cells and acts as a specific signal for engulfment. This chain is XK-related protein 9, found in Pan troglodytes (Chimpanzee).